The chain runs to 540 residues: MLO protein homolog 1 (540 aa).

Over 1–16 (MAGGRSGSRELPETPT) the chain is Extracellular. Residues 17–37 (WAVAVVCAVLVLVSAAMEHGL) traverse the membrane as a helical segment. Residues 38-60 (HNLSHWFRRRQKKAMGDALDKIK) are Cytoplasmic-facing. The chain crosses the membrane as a helical span at residues 61-81 (AELMLLGFISLLLTVAQAPIS). Residues 82 to 142 (KICIPKSAAN…MSAKSMHQLH (61 aa)) are Extracellular-facing. The helical transmembrane segment at 143–163 (IFIFVLAVFHVTYCIITMGLG) threads the bilayer. Topologically, residues 164–265 (RLKMKKWKKW…IKRSLEDDFK (102 aa)) are cytoplasmic. A helical transmembrane segment spans residues 266-286 (VVVGISLPLWFVGILVLFLDI). Position 287 (H287) is a topological domain, extracellular. Residues 288–308 (GLGTLIWISFVPLIIVLLVGT) traverse the membrane as a helical segment. Over 309-347 (KLEMVIMEMAQEIQDRATVIQGAPMVEPSNKYFWFNRPD) the chain is Cytoplasmic. Residues 348 to 368 (WVLFFIHLTLFHNAFQMAHFV) form a helical membrane-spanning segment. Residues 369 to 383 (WTMATPGLKKCFHEN) are Extracellular-facing. Residues 384-404 (IWLSIVEVIVGISLQVLCSYI) traverse the membrane as a helical segment. The Cytoplasmic portion of the chain corresponds to 405–540 (TFPLYALVTQ…DSDFSFSAQR (136 aa)). The segment at 426–447 (EQTMKALMNWRKKAMEKKKVRD) is calmodulin-binding. The tract at residues 468 to 526 (ASPVHLLQDHRARSDDPPSPITVASPPAPEEDMYPVPAAAASRQLLDDPPDRRWMASSS) is disordered. Composition is skewed to basic and acidic residues over residues 474–483 (LQDHRARSDD) and 512–521 (LLDDPPDRRW).

The protein belongs to the MLO family.

The protein localises to the membrane. May be involved in modulation of pathogen defense and leaf cell death. Activity seems to be regulated by Ca(2+)-dependent calmodulin binding and seems not to require heterotrimeric G proteins. The chain is MLO protein homolog 1 (MLO1) from Oryza sativa subsp. indica (Rice).